We begin with the raw amino-acid sequence, 1577 residues long: MAP kinase-activating death domain protein (1577 aa).

The uDENN domain occupies 13–267; it reads YLVIVGARHP…VPVSGQKRVD (255 aa). The span at 106–121 shows a compositional bias: basic and acidic residues; it reads KEKVEGGAGPRGKEGA. The segment at 106 to 166 is disordered; sequence KEKVEGGAGP…WGKRRAKAGS (61 aa). Over residues 123–140 the composition is skewed to low complexity; that stretch reads TSGASEEAATGSSESGST. Residues 141–156 show a composition bias toward polar residues; it reads LQPPSADSTPDINQSP. Ser155 carries the post-translational modification Phosphoserine. Positions 288–428 constitute a cDENN domain; the sequence is RFTLVDFPLH…ESLELKKHLK (141 aa). The 135-residue stretch at 430 to 564 folds into the dDENN domain; that stretch reads ALASMSLNTQ…LNPSNYAFQR (135 aa). 2 disordered regions span residues 604-635 and 676-840; these read LSVPPERDSDSDPTEDSGSDSQDYDDSSSSYS and QPQK…NSTE. The span at 614-629 shows a compositional bias: acidic residues; the sequence is SDPTEDSGSDSQDYDD. Ser688 and Ser691 each carry phosphoserine. The span at 688–698 shows a compositional bias: polar residues; that stretch reads SENSQENPPLR. Low complexity predominate over residues 699–715; that stretch reads SSSSTTASSSPSTVVHS. Residues 793-803 show a composition bias toward polar residues; it reads PRFSQHVSGSR. Phosphoserine occurs at positions 812, 817, and 819. Low complexity predominate over residues 826–839; it reads RASSPNSTVSNNST. Ser857, Ser861, Ser915, Ser920, Ser929, and Ser1058 each carry phosphoserine. 3 disordered regions span residues 912–940, 1050–1109, and 1127–1272; these read QKSSVIKHSPTVKREPSSPQGRSSNSSEN, KEPD…DTRS, and EVKK…RSSE. Over residues 928–938 the composition is skewed to low complexity; the sequence is SSPQGRSSNSS. A phosphothreonine mark is found at Thr1060 and Thr1065. Ser1109 is modified (phosphoserine). Over residues 1127 to 1141 the composition is skewed to basic and acidic residues; it reads EVKKQKALEKQRPEG. Residues 1157 to 1172 are compositionally biased toward polar residues; that stretch reads QMSADSGVSLTSASQR. Residues 1189 to 1203 are compositionally biased toward low complexity; that stretch reads SSSQDSEVSTVSNSS. Over residues 1232–1248 the composition is skewed to polar residues; that stretch reads SRATLSDSEIETNSATS. Phosphothreonine is present on Thr1235. Residues Ser1237 and Ser1266 each carry the phosphoserine modification. In terms of domain architecture, Death spans 1336–1411; the sequence is GMDQGPQEMI…GLVYSQQVNE (76 aa).

Belongs to the MADD family. In terms of assembly, interacts (via death domain) with TNFRSF1A (via death domain). Interacts with PIDD1. Interacts with YWHAZ. Interacts (via death domain) with KIF1B; links the motor KIF1B to Rab3-carrying vesicles in anterograde synaptic vesicle transport. Interacts with KIF1A. Interacts (via uDENN domain) with RAB3A, RAB3B, RAB3C and RAB3D; the GTP-bound form of the Rab proteins is preferred for interaction. As to expression, expressed in the brain.

It localises to the cell membrane. The protein resides in the cytoplasm. Its subcellular location is the cell projection. The protein localises to the axon. Guanyl-nucleotide exchange factor that regulates small GTPases of the Rab family. Converts GDP-bound inactive form of RAB27A and RAB27B to the GTP-bound active forms. Converts GDP-bound inactive form of RAB3A, RAB3C and RAB3D to the GTP-bound active forms, GTPases involved in synaptic vesicle exocytosis and vesicle secretion. Plays a role in synaptic vesicle formation and in vesicle trafficking at the neuromuscular junction. Involved in up-regulating a post-docking step of synaptic exocytosis in central synapses. Probably by binding to the motor proteins KIF1B and KIF1A, mediates motor-dependent transport of GTP-RAB3A-positive vesicles to the presynaptic nerve terminals. Plays a role in TNFA-mediated activation of the MAPK pathway, including ERK1/2. May link TNFRSF1A with MAP kinase activation. May be involved in the regulation of TNFA-induced apoptosis. The protein is MAP kinase-activating death domain protein of Mus musculus (Mouse).